A 1106-amino-acid polypeptide reads, in one-letter code: Protein translocase subunit SecA (1106 aa).

ATP contacts are provided by residues Gln-175, 193 to 197 (GEGKT), and Asp-694. The disordered stretch occupies residues 1021–1106 (QEAPADEQQP…KYKNCHGQNA (86 aa)). Residues 1042–1056 (QRQDMSKYREQKQDL) show a composition bias toward basic and acidic residues. Residues 1057–1067 (SDPNQQAAASQ) show a composition bias toward polar residues. Basic and acidic residues predominate over residues 1068-1085 (DTREQQKREPIRAEKTVG). Zn(2+)-binding residues include Cys-1090, Cys-1092, Cys-1101, and His-1102.

The protein belongs to the SecA family. In terms of assembly, monomer and homodimer. Part of the essential Sec protein translocation apparatus which comprises SecA, SecYEG and auxiliary proteins SecDF. Other proteins may also be involved. Zn(2+) is required as a cofactor.

It localises to the cell inner membrane. The protein resides in the cytoplasm. It carries out the reaction ATP + H2O + cellular proteinSide 1 = ADP + phosphate + cellular proteinSide 2.. Functionally, part of the Sec protein translocase complex. Interacts with the SecYEG preprotein conducting channel. Has a central role in coupling the hydrolysis of ATP to the transfer of proteins into and across the cell membrane, serving as an ATP-driven molecular motor driving the stepwise translocation of polypeptide chains across the membrane. In Bacteroides thetaiotaomicron (strain ATCC 29148 / DSM 2079 / JCM 5827 / CCUG 10774 / NCTC 10582 / VPI-5482 / E50), this protein is Protein translocase subunit SecA.